We begin with the raw amino-acid sequence, 153 residues long: Ribonuclease H (153 aa).

The 142-residue stretch at 1-142 folds into the RNase H type-1 domain; that stretch reads MRKKIEIFTD…CDELARIAAE (142 aa). Mg(2+)-binding residues include aspartate 10, glutamate 48, aspartate 70, and aspartate 134.

It belongs to the RNase H family. Monomer. Requires Mg(2+) as cofactor.

Its subcellular location is the cytoplasm. The enzyme catalyses Endonucleolytic cleavage to 5'-phosphomonoester.. In terms of biological role, endonuclease that specifically degrades the RNA of RNA-DNA hybrids. This Baumannia cicadellinicola subsp. Homalodisca coagulata protein is Ribonuclease H.